Here is an 86-residue protein sequence, read N- to C-terminus: High affinity immunoglobulin epsilon receptor subunit gamma (86 aa).

Positions 1–18 (MISAVILFLLLLVEQAAA) are cleaved as a signal peptide. The Extracellular segment spans residues 19–23 (LGEPQ). A helical membrane pass occupies residues 24–44 (LCYILDAVLFLYGIVLTLLYC). At 45 to 86 (RLKIQVRKAAIASREKADAVYTGLNTRSQETYETLKHEKPPQ) the chain is on the cytoplasmic side. In terms of domain architecture, ITAM spans 54 to 82 (AIASREKADAVYTGLNTRSQETYETLKHE). Phosphotyrosine is present on residues tyrosine 65 and tyrosine 76. Phosphothreonine is present on threonine 78.

The protein belongs to the CD3Z/FCER1G family. In terms of assembly, igE Fc receptor is a tetramer of an alpha chain, a beta chain, and two disulfide linked gamma chains. Associates with FCGR1A; forms a functional signaling complex. The signaling subunit of immunoglobulin gamma (IgG) Fc receptor complex. As a homodimer or a heterodimer of CD247 and FCER1G, associates with the ligand binding subunit FCGR3A to form a functional receptor complex. Associates with CLEC6A. Interacts with CLEC4E. Interacts (via ITAM domain) with SYK (via SH2 domains); activates SYK, enabling integrin-mediated activation of neutrophils and macrophages. Interacts with CSF2RB and recruits SYK in response to IL3 stimulation; this interaction is direct. Interacts with CD300LH; the interaction may be indirect. Interacts with CD300LD. Interacts with TARM1. In terms of tissue distribution, expressed in mast cells (at protein level). Expressed in basophils (at protein level).

It is found in the cell membrane. Its function is as follows. Adapter protein containing an immunoreceptor tyrosine-based activation motif (ITAM) that transduces activation signals from various immunoreceptors. As a component of the high-affinity immunoglobulin E (IgE) receptor, mediates allergic inflammatory signaling in mast cells. As a constitutive component of interleukin-3 receptor complex, selectively mediates interleukin 4/IL4 production by basophils, priming T-cells toward effector T-helper 2 subset. Associates with pattern recognition receptors CLEC4D and CLEC4E to form a functional signaling complex in myeloid cells. Binding of mycobacterial trehalose 6,6'-dimycolate (TDM) to this receptor complex leads to phosphorylation of ITAM, triggering activation of SYK, CARD9 and NF-kappa-B, consequently driving maturation of antigen-presenting cells and shaping antigen-specific priming of T-cells toward effector T-helper 1 and T-helper 17 cell subtypes. May function cooperatively with other activating receptors. Functionally linked to integrin beta-2/ITGB2-mediated neutrophil activation. Also involved in integrin alpha-2/ITGA2-mediated platelet activation. The protein is High affinity immunoglobulin epsilon receptor subunit gamma of Mus musculus (Mouse).